A 390-amino-acid chain; its full sequence is (S)-8-oxocitronellyl enol synthase CYC2 (390 aa).

NADP(+) is bound by residues 35-37 (TGI), 63-64 (RR), 81-82 (DI), 105-106 (TW), and glutamine 143. Active-site residues include lysine 147 and tyrosine 179. Positions 147 and 179 each coordinate substrate. NADP(+)-binding positions include tyrosine 179 and 213-215 (SMM).

The protein belongs to the short-chain dehydrogenases/reductases (SDR) family. Highly divergent.

It carries out the reaction (S)-8-oxocitronellyl enol + NADP(+) = (6E)-8-oxogeranial + NADPH + H(+). The enzyme catalyses (S)-8-oxocitronellyl enol + NAD(+) = (6E)-8-oxogeranial + NADH + H(+). Its function is as follows. Iridoid synthase that catalyzes the first step in generation of the iridoid ring scaffold using the linear monoterpene (6E)-8-oxogeranial as substrate. Iridoids comprise a large family of distinctive bicyclic monoterpenes that possess a wide range of pharmacological activities, including anticancer, anti-inflammatory, antifungal and antibacterial activities. This chain is (S)-8-oxocitronellyl enol synthase CYC2, found in Camptotheca acuminata (Happy tree).